The chain runs to 578 residues: Putative ankyrin repeat protein FPV022 (578 aa).

11 ANK repeats span residues 4–34, 38–67, 68–97, 100–129, 160–189, 222–251, 255–287, 320–349, 353–382, 386–415, and 419–449; these read RRKS…DLNK, KNRT…KMSA, CKVP…SVDV, KGET…SGPY, YGHT…ITDN, EGTT…DPKV, HSVS…MVNM, YLSE…NINK, YGNI…DVNA, DGNT…DINS, and NGRT…KKNK.

This Fowlpox virus (strain NVSL) (FPV) protein is Putative ankyrin repeat protein FPV022.